We begin with the raw amino-acid sequence, 1072 residues long: Error-prone DNA polymerase (1072 aa).

It belongs to the DNA polymerase type-C family. DnaE2 subfamily.

It is found in the cytoplasm. The enzyme catalyses DNA(n) + a 2'-deoxyribonucleoside 5'-triphosphate = DNA(n+1) + diphosphate. Its function is as follows. DNA polymerase involved in damage-induced mutagenesis and translesion synthesis (TLS). It is not the major replicative DNA polymerase. The polypeptide is Error-prone DNA polymerase (Burkholderia pseudomallei (strain K96243)).